Reading from the N-terminus, the 552-residue chain is Threonylcarbamoyladenosine tRNA methylthiotransferase (552 aa).

Residues 31–61 (YENKKTVTVRAKKRSQIRLESQEEEEKPKPT) are disordered. Residues 71-178 (QKVFVKTWGC…VVEVVEETLK (108 aa)) form the MTTase N-terminal domain. [4Fe-4S] cluster is bound by residues cysteine 80, cysteine 115, cysteine 144, cysteine 221, cysteine 225, and cysteine 228. One can recognise a Radical SAM core domain in the interval 207–438 (RKNPLIEIIS…DLFYSYEPYA (232 aa)). Positions 438–500 (ADRVGEIYTV…KFSMVGEILD (63 aa)) constitute a TRAM domain. A helical membrane pass occupies residues 532-552 (FGIALVLGSLAFLIQLVVRLL).

It belongs to the methylthiotransferase family. CDKAL1 subfamily. [4Fe-4S] cluster serves as cofactor.

The protein localises to the membrane. The catalysed reaction is N(6)-L-threonylcarbamoyladenosine(37) in tRNA + (sulfur carrier)-SH + AH2 + 2 S-adenosyl-L-methionine = 2-methylsulfanyl-N(6)-L-threonylcarbamoyladenosine(37) in tRNA + (sulfur carrier)-H + 5'-deoxyadenosine + L-methionine + A + S-adenosyl-L-homocysteine + 2 H(+). Functionally, catalyzes the methylthiolation of N6-threonylcarbamoyladenosine (t(6)A), leading to the formation of 2-methylthio-N6-threonylcarbamoyladenosine (ms(2)t(6)A) at position 37 in tRNAs that read codons beginning with adenine. This is Threonylcarbamoyladenosine tRNA methylthiotransferase from Drosophila melanogaster (Fruit fly).